Reading from the N-terminus, the 271-residue chain is 3-methyl-2-oxobutanoate hydroxymethyltransferase 2 (271 aa).

Mg(2+) contacts are provided by D53 and D92. 3-methyl-2-oxobutanoate-binding positions include 53–54 (DS), D92, and K120. Residue E122 coordinates Mg(2+). The active-site Proton acceptor is E189.

The protein belongs to the PanB family. In terms of assembly, homodecamer; pentamer of dimers. The cofactor is Mg(2+).

It localises to the cytoplasm. The enzyme catalyses 3-methyl-2-oxobutanoate + (6R)-5,10-methylene-5,6,7,8-tetrahydrofolate + H2O = 2-dehydropantoate + (6S)-5,6,7,8-tetrahydrofolate. It functions in the pathway cofactor biosynthesis; (R)-pantothenate biosynthesis; (R)-pantoate from 3-methyl-2-oxobutanoate: step 1/2. Catalyzes the reversible reaction in which hydroxymethyl group from 5,10-methylenetetrahydrofolate is transferred onto alpha-ketoisovalerate to form ketopantoate. In Burkholderia lata (strain ATCC 17760 / DSM 23089 / LMG 22485 / NCIMB 9086 / R18194 / 383), this protein is 3-methyl-2-oxobutanoate hydroxymethyltransferase 2.